Consider the following 329-residue polypeptide: Ig gamma-2C chain C region (329 aa).

The segment at 1-97 (ARTTAPSVYP…ATKSNLIKRI (97 aa)) is CH1. A disulfide bridge connects residues Cys27 and Cys82. Positions 98-113 (EPRRPKPRPPTDICSC) are hinge. Residues 114–222 (DDNLGRPSVF…PIEKTISKPR (109 aa)) form a CH2 region. 2 cysteine pairs are disulfide-bonded: Cys143–Cys203 and Cys249–Cys307. The CH3 stretch occupies residues 223–329 (GKARTPQVYT…QKNLSRSPGK (107 aa)).

The chain is Ig gamma-2C chain C region from Rattus norvegicus (Rat).